A 212-amino-acid chain; its full sequence is Ras-related protein Rab-17 (212 aa).

The residue at position 29 (S29) is a Phosphoserine. 4 residues coordinate GTP: G31, K32, S33, and T50. Residues S33, T50, and D73 each coordinate Mg(2+). Positions D43 to A54 match the Switch 1 motif. The Switch 2 motif lies at A75 to A91. 5 residues coordinate GTP: G76, N132, K133, D135, and A163. Residues C209 and C210 are each lipidated (S-geranylgeranyl cysteine).

This sequence belongs to the small GTPase superfamily. Rab family. Mg(2+) serves as cofactor. Expressed in melanocytes (at protein level).

It is found in the recycling endosome membrane. The protein localises to the melanosome. The protein resides in the cell projection. Its subcellular location is the dendrite. The catalysed reaction is GTP + H2O = GDP + phosphate + H(+). Regulated by guanine nucleotide exchange factors (GEFs) which promote the exchange of bound GDP for free GTP. Regulated by GTPase activating proteins (GAPs) which increase the GTP hydrolysis activity. Inhibited by GDP dissociation inhibitors (GDIs). Its function is as follows. The small GTPases Rab are key regulators of intracellular membrane trafficking, from the formation of transport vesicles to their fusion with membranes. Rabs cycle between an inactive GDP-bound form and an active GTP-bound form that is able to recruit to membranes different set of downstream effectors directly responsible for vesicle formation, movement, tethering and fusion. RAB17 is involved in transcytosis, the directed movement of endocytosed material through the cell and its exocytosis from the plasma membrane at the opposite side. Mainly observed in epithelial cells, transcytosis mediates for instance, the transcellular transport of immunoglobulins from the basolateral surface to the apical surface. Most probably controls membrane trafficking through apical recycling endosomes in a post-endocytic step of transcytosis. Required for melanosome transport and release from melanocytes, it also regulates dendrite and dendritic spine development. May also play a role in cell migration. In Homo sapiens (Human), this protein is Ras-related protein Rab-17.